The sequence spans 623 residues: Protein vein (623 aa).

The signal sequence occupies residues 1-40 (MYAQHLRKWSLKTKKQLMPLILLIISYMLLLNTCVLSSSA). 4 disordered regions span residues 70–98 (IPLSSDNGSGSSESSAESGSSSSRSSSNN), 130–162 (DAGSSTPAQQEQHVAAVPEQQQQQQQQQQSMQK), 184–214 (AASSKMRRHIQPSQLPHQPESRAQLPSNYSS), and 229–317 (PESM…QRYN). Low complexity-rich tracts occupy residues 72 to 98 (LSSDNGSGSSESSAESGSSSSRSSSNN) and 136 to 158 (PAQQEQHVAAVPEQQQQQQQQQQ). Asparagine 76 carries an N-linked (GlcNAc...) asparagine glycan. Asparagine 211 carries an N-linked (GlcNAc...) asparagine glycan. Over residues 233–248 (LEDRSPEQAARSRRDG) the composition is skewed to basic and acidic residues. Asparagine 252 carries N-linked (GlcNAc...) asparagine glycosylation. A compositionally biased stretch (low complexity) spans 255 to 267 (RQQQRTGHRQQLQ). A compositionally biased stretch (basic residues) spans 305–316 (QRRKHQRKHQRY). N-linked (GlcNAc...) asparagine glycans are attached at residues asparagine 350, asparagine 381, asparagine 424, asparagine 449, asparagine 521, and asparagine 574. The 86-residue stretch at 457 to 542 (TKIFSKPSKA…AKNKASKAIA (86 aa)) folds into the Ig-like C2-type domain. 4 disulfide bridges follow: cysteine 478-cysteine 531, cysteine 566-cysteine 577, cysteine 571-cysteine 588, and cysteine 590-cysteine 599. Positions 561–599 (ASGIPCNFDYCFHNGTCRMIPDINEVYCRCPTEYFGNRC) constitute an EGF-like domain.

The protein localises to the secreted. Functionally, ligand for the EGF receptor. Seems to play a role in the global proliferation of wing disc cells and the larval patterning. Shows a strong synergistic genetic interaction with spi, suggesting a molecular interdependence. Required for the development of interveins cells. This Drosophila melanogaster (Fruit fly) protein is Protein vein (vn).